The sequence spans 92 residues: Sec-independent protein translocase protein TatA (92 aa).

A helical transmembrane segment spans residues 1 to 21 (MGIFDWKHWIVILVVVVLVFG). The interval 43–92 (MNDDEKPADPTVTPAQPVPPVQPQATAQANPPHTIDVQAQKVEEPIRKDV) is disordered. Residues 65-74 (PQATAQANPP) are compositionally biased toward low complexity. Basic and acidic residues predominate over residues 83-92 (KVEEPIRKDV).

This sequence belongs to the TatA/E family. In terms of assembly, the Tat system comprises two distinct complexes: a TatABC complex, containing multiple copies of TatA, TatB and TatC subunits, and a separate TatA complex, containing only TatA subunits. Substrates initially bind to the TatABC complex, which probably triggers association of the separate TatA complex to form the active translocon.

Its subcellular location is the cell inner membrane. Its function is as follows. Part of the twin-arginine translocation (Tat) system that transports large folded proteins containing a characteristic twin-arginine motif in their signal peptide across membranes. TatA could form the protein-conducting channel of the Tat system. The sequence is that of Sec-independent protein translocase protein TatA from Pseudomonas fluorescens (strain Pf0-1).